Here is a 214-residue protein sequence, read N- to C-terminus: Cytochrome b (214 aa).

The next 4 membrane-spanning stretches (helical) occupy residues 31–51 (FGSMLLICLMIQTTTGFFLAI), 75–96 (WIMQNTHAIGASLFFICIYTHI), 111–131 (WLSGTTLLIILMATAFFGYVL), and 176–196 (FFALHFILPFAIISLSSIHIL). Heme b contacts are provided by H81 and H95. 2 residues coordinate heme b: H180 and H194. A ubiquinone is bound at residue H199.

This sequence belongs to the cytochrome b family. As to quaternary structure, the cytochrome bc1 complex contains 3 respiratory subunits (MT-CYB, CYC1 and UQCRFS1), 2 core proteins (UQCRC1 and UQCRC2) and probably 6 low-molecular weight proteins. Requires heme b as cofactor.

Its subcellular location is the mitochondrion inner membrane. Its function is as follows. Component of the ubiquinol-cytochrome c reductase complex (complex III or cytochrome b-c1 complex) that is part of the mitochondrial respiratory chain. The b-c1 complex mediates electron transfer from ubiquinol to cytochrome c. Contributes to the generation of a proton gradient across the mitochondrial membrane that is then used for ATP synthesis. This Lachesis muta muta (Bushmaster) protein is Cytochrome b (MT-CYB).